Here is a 260-residue protein sequence, read N- to C-terminus: DNA repair protein RecO (260 aa).

The protein belongs to the RecO family.

Its function is as follows. Involved in DNA repair and RecF pathway recombination. This is DNA repair protein RecO from Chlorobaculum parvum (strain DSM 263 / NCIMB 8327) (Chlorobium vibrioforme subsp. thiosulfatophilum).